A 48-amino-acid polypeptide reads, in one-letter code: Protein TUNAR (48 aa).

Positions 1–20 (MVITSENDEDRGGQEKESKE) are disordered. Residues 10-20 (DRGGQEKESKE) are compositionally biased toward basic and acidic residues. The chain crosses the membrane as a helical span at residues 24-44 (LAMLGIIGTILNLIVIIFVYI).

In terms of assembly, interacts with ATPase ATP2A2/SERCA2. Interacts with ATPase ATP2A3/SERCA3; the interaction occurs at low levels in low glucose conditions and is increased by high glucose levels. In terms of tissue distribution, highly expressed in pancreatic islets where it is enriched in the insulin-producing beta cells.

Its subcellular location is the endoplasmic reticulum membrane. It is found in the extracellular vesicle membrane. In neurons, plays a role in the regulation of intracellular Ca(2+), possibly by acting as an activator of ATP2A2/SERCA2, thus increasing the efficiency with which Ca(2+) is removed from the cytoplasm. Inhibits differentiation of embryonic stem cells into neurons and inhibits neurite outgrowth, likely as a result of its role in intracellular Ca(2+) regulation. In pancreatic beta cells, lowers Ca(2+) levels in the endoplasmic reticulum and enhances glucose-stimulated insulin secretion. This chain is Protein TUNAR, found in Homo sapiens (Human).